The sequence spans 388 residues: Basigin (388 aa).

The N-terminal stretch at 1 to 21 (MAAGADVPCAVLALLVLGSLA) is a signal peptide. At 27 to 323 (TAGFIKSPLS…SGSATVNLRV (297 aa)) the chain is on the extracellular side. An Ig-like domain is found at 43-131 (DSVELHCEAV…NHLSKSPKVK (89 aa)). 2 disulfide bridges follow: Cys49/Cys113 and Cys162/Cys211. In terms of domain architecture, Ig-like C2-type spans 143–218 (ERPVITGQYS…YECIYNTNPV (76 aa)). N-linked (GlcNAc...) asparagine glycosylation is found at Asn163, Asn222, Asn280, Asn286, and Asn307. In terms of domain architecture, Ig-like V-type spans 229–323 (PQVVAYKKSE…SGSATVNLRV (95 aa)). Residues Cys250 and Cys306 are joined by a disulfide bond. Residues 324–344 (RSRLAALWPFLGIVAEVLVLV) traverse the membrane as a helical segment. Residues 345-388 (TIIFIYEKRRKPDEVLDDDDGGSAPLKSNATNHKDKNVRQRNAN) are Cytoplasmic-facing. A disordered region spans residues 358–388 (EVLDDDDGGSAPLKSNATNHKDKNVRQRNAN).

As to quaternary structure, interacts with NXNL1, SLC2A1 and SLC16A1. In terms of processing, N-glycosylated. Retinal cone photoreceptors (at protein level). In terms of tissue distribution, brain endothelial cells, kidney epithelial cells and erythroblasts (at protein level).

The protein localises to the cell membrane. It is found in the photoreceptor inner segment. It localises to the cell projection. Its subcellular location is the cilium. The protein resides in the photoreceptor outer segment. The protein localises to the endoplasmic reticulum membrane. It is found in the basolateral cell membrane. In terms of biological role, essential for normal retinal maturation and development. Acts as a retinal cell surface receptor for NXNL1 and plays an important role in NXNL1-mediated survival of retinal cone photoreceptors. In association with glucose transporter SLC16A1/GLUT1 and NXNL1, promotes retinal cone survival by enhancing aerobic glycolysis and accelerating the entry of glucose into photoreceptors. Its function is as follows. Signaling receptor for cyclophilins, essential for PPIA/CYPA and PPIB/CYPB-dependent signaling related to chemotaxis and adhesion of immune cells. Plays an important role in targeting the monocarboxylate transporters SLC16A1/GLUT1, SLC16A3, SLC16A8, SLC16A11 and SLC16A12 to the plasma membrane. Acts as a coreceptor for vascular endothelial growth factor receptor 2 (KDR/VEGFR2) in endothelial cells enhancing its VEGFA-mediated activation and downstream signaling. Promotes angiogenesis through EPAS1/HIF2A-mediated up-regulation of VEGFA and KDR/VEGFR2 in endothelial cells. This chain is Basigin (BSG), found in Gallus gallus (Chicken).